A 262-amino-acid chain; its full sequence is Abhydrolase domain-containing protein ACTT2-1 (262 aa).

Positions 260 to 262 (SKL) match the Peroxisomal targeting signal type 1 motif.

This sequence belongs to the AB hydrolase superfamily. AKT2 hydrolase family.

The protein localises to the peroxisome. It functions in the pathway mycotoxin biosynthesis. In terms of biological role, abhydrolase domain-containing protein; part of the gene clusters that mediate the biosynthesis of the host-selective toxins (HSTs) ACT-toxins responsible for brown spot of tangerine disease by the tangerine pathotype which affects tangerines and mandarins. ACT-toxins consist of three moieties, 9,10-epoxy-8-hydroxy-9-methyl-decatrienoic acid (EDA), valine and a polyketide. ACT-toxin I is toxic to both citrus and pear; toxin II the 5''-deoxy derivative of ACT-toxin I, is highly toxic to pear and slightly toxic to citrus. On cellular level, ACT-toxins affect plasma membrane of susceptible cells and cause a sudden increase in loss of K(+) after a few minutes of toxin treatment. The acyl-CoA ligase ACTT1, the hydrolase ACTT2, the enoyl-CoA hydratases ACTT3 and ACTT6, and the acyl-CoA synthetase ACTT5 are all involved in the biosynthesis of the AK-, AF- and ACT-toxin common 9,10-epoxy-8-hydroxy-9-methyl-decatrienoic acid (EDA) structural moiety. The exact role of each enzyme, and of additional enzymes identified within the AF-toxin clusters have still to be determined. On the other hand, ACTTS1 to ACTTS4 are specific to the tangerine pathotype. The function of ACTTS3 is to elongate the polyketide chain portion of ACT-toxin that is unique to this toxin. The enoyl-reductase ACTTS2 might complement the missing enoyl-reductase (ER) domain in ACTTS3 in the synthesis of the polyketide portion of ACT-toxin. The roles of the nonribosomal peptide synthetases-related proteins ACTTS1 and ACTTS4 have also still not been elucidated. This chain is Abhydrolase domain-containing protein ACTT2-1, found in Alternaria alternata (Alternaria rot fungus).